Reading from the N-terminus, the 130-residue chain is Albumin-1 B (130 aa).

An N-terminal signal peptide occupies residues 1-26 (MASVKLASLMVLFATLGMFLTKNVGA). 3 disulfides stabilise this stretch: Cys29-Cys46, Cys33-Cys48, and Cys41-Cys58. Propeptides lie at residues 64-69 (VFLRTN) and 123-130 (LLKSVSTA).

Post-translationally, the C-terminal glycine may be removed from PA1b. In terms of tissue distribution, major component of both the cotyledons and embryonic axes of mature seeds.

In terms of biological role, PA1b binds to basic 7S globulin (BG) and stimulates its phosphorylation activity. Involved in the signal transduction system to regulate the growth and differentiation as a hormone peptide. Toxic to various insects through binding to a high affinity binding site in the insect gut. This chain is Albumin-1 B, found in Pisum sativum (Garden pea).